The following is a 321-amino-acid chain: Glucokinase (321 aa).

ATP is bound at residue 8 to 13; sequence GDVGGT.

The protein belongs to the bacterial glucokinase family.

It localises to the cytoplasm. The catalysed reaction is D-glucose + ATP = D-glucose 6-phosphate + ADP + H(+). The chain is Glucokinase from Salmonella heidelberg (strain SL476).